The primary structure comprises 148 residues: Large ribosomal subunit protein bL9 (148 aa).

It belongs to the bacterial ribosomal protein bL9 family.

Functionally, binds to the 23S rRNA. The chain is Large ribosomal subunit protein bL9 from Pseudomonas putida (strain W619).